Reading from the N-terminus, the 39-residue chain is Conotoxin Cl14.7 (39 aa).

A propeptide spanning residues 1-15 (MGDLSEADSMKHQLQ) is cleaved from the precursor.

Contains 2 disulfide bonds. Expressed by the venom duct.

The protein localises to the secreted. The protein is Conotoxin Cl14.7 of Californiconus californicus (California cone).